The following is a 509-amino-acid chain: MQSWSRVYCSLAKRGHFNRISHGLQGLSAVPLRTYADQPIDADVTVIGSGPGGYVAAIKAAQLGFKTVCVEKNETLGGTCLNVGCIPSKALLNNSHYYHMAHGKDFASRGIEMSEVRLNLDKMMEQKSTAVKALTGGIAHLFKQNKVVHVNGYGKITGKNQVTATKADGGTQVIDTKNILIATGSEVTPFPGIMIDEDTIVSSTGALSLKKVPEKMVVIGAGVIGVELGSVWQRLGADVTAVEFLGHVGGVGIDMEISKNFQRILQKQGFKFKLNTKVTGATKKSDGKIDVSIEAASGGKAEVITCDVLLVCIGRRPFTKNLGLEELGIELDPRGRIPVNTRFQTKIPNIYAIGDVVAGPMLAHKAEDEGIICVEGMAGGAVHIDYNCVPSVIYTHPEVAWVGKSEEQLKEEGIEYKVGKFPFAANSRAKTNADTDGMVKILGQKSTDRVLGAHILGPGAGGMVNEAALALEYGASCEDIARVCHAHPTLSEAFREANLAASFGKSINF.

The N-terminal 35 residues, 1 to 35 (MQSWSRVYCSLAKRGHFNRISHGLQGLSAVPLRTY), are a transit peptide targeting the mitochondrion. An N6-acetyllysine; alternate modification is found at Lys66. Lys66 carries the N6-succinyllysine; alternate modification. Residues 71–80 (EKNETLGGTC) and Lys89 contribute to the FAD site. A disulfide bridge connects residues Cys80 and Cys85. Lys104, Lys122, Lys132, and Lys143 each carry N6-acetyllysine; alternate. Residues Lys104, Lys122, Lys132, and Lys143 each carry the N6-succinyllysine; alternate modification. Gly154 provides a ligand contact to FAD. An N6-succinyllysine mark is found at Lys159 and Lys166. 183-185 (TGS) is a binding site for FAD. NAD(+) is bound by residues 220 to 227 (GAGVIGVE) and Glu243. An N6-succinyllysine mark is found at Lys273 and Lys277. Val278 is an NAD(+) binding site. Residues Ser285 and Ser297 each carry the phosphoserine modification. Residue Gly314 participates in NAD(+) binding. Residue Lys346 is modified to N6-acetyllysine. FAD contacts are provided by residues Asp355 and 361 to 364 (MLAH). The residue at position 410 (Lys410) is an N6-acetyllysine; alternate. Lys410 bears the N6-succinyllysine; alternate mark. N6-acetyllysine occurs at positions 417 and 420. Lys430 carries the N6-succinyllysine modification. His487 (proton acceptor) is an active-site residue. Ser502 is modified (phosphoserine). Residue Lys505 is modified to N6-acetyllysine; alternate. Lys505 is subject to N6-succinyllysine; alternate.

It belongs to the class-I pyridine nucleotide-disulfide oxidoreductase family. In terms of assembly, homodimer. Part of the multimeric pyruvate dehydrogenase complex that contains multiple copies of pyruvate dehydrogenase (subunits PDHA (PDHA1 or PDHA2) and PDHB, E1), dihydrolipoamide acetyltransferase (DLAT, E2) and lipoamide dehydrogenase (DLD, E3). These subunits are bound to an inner core composed of about 48 DLAT and 12 PDHX molecules (by non covalent bonds). The 2-oxoglutarate dehydrogenase complex is composed of OGDH (2-oxoglutarate dehydrogenase; E1), DLST (dihydrolipoamide succinyltransferase; E2), DLD (dihydrolipoamide dehydrogenase; E3) and the assembly factor KGD4. It contains multiple copies of the three enzymatic components (E1, E2 and E3). In the nucleus, the 2-oxoglutarate dehydrogenase complex associates with KAT2A. Interacts with PDHX. FAD is required as a cofactor. Post-translationally, tyrosine phosphorylated.

It is found in the mitochondrion matrix. The protein resides in the nucleus. The protein localises to the cell projection. Its subcellular location is the cilium. It localises to the flagellum. It is found in the cytoplasmic vesicle. The protein resides in the secretory vesicle. The protein localises to the acrosome. It carries out the reaction N(6)-[(R)-dihydrolipoyl]-L-lysyl-[protein] + NAD(+) = N(6)-[(R)-lipoyl]-L-lysyl-[protein] + NADH + H(+). In terms of biological role, lipoamide dehydrogenase is a component of the glycine cleavage system as well as an E3 component of three alpha-ketoacid dehydrogenase complexes (pyruvate-, alpha-ketoglutarate-, and branched-chain amino acid-dehydrogenase complex). The 2-oxoglutarate dehydrogenase complex is mainly active in the mitochondrion. A fraction of the 2-oxoglutarate dehydrogenase complex also localizes in the nucleus and is required for lysine succinylation of histones: associates with KAT2A on chromatin and provides succinyl-CoA to histone succinyltransferase KAT2A. In monomeric form may have additional moonlighting function as serine protease. Involved in the hyperactivation of spermatazoa during capacitation and in the spermatazoal acrosome reaction. This Pongo abelii (Sumatran orangutan) protein is Dihydrolipoyl dehydrogenase, mitochondrial (DLD).